A 271-amino-acid polypeptide reads, in one-letter code: Ribosomal RNA small subunit methyltransferase A (271 aa).

Residues H11, L13, G38, E58, D86, and N101 each coordinate S-adenosyl-L-methionine.

The protein belongs to the class I-like SAM-binding methyltransferase superfamily. rRNA adenine N(6)-methyltransferase family. RsmA subfamily.

It localises to the cytoplasm. It carries out the reaction adenosine(1518)/adenosine(1519) in 16S rRNA + 4 S-adenosyl-L-methionine = N(6)-dimethyladenosine(1518)/N(6)-dimethyladenosine(1519) in 16S rRNA + 4 S-adenosyl-L-homocysteine + 4 H(+). Specifically dimethylates two adjacent adenosines (A1518 and A1519) in the loop of a conserved hairpin near the 3'-end of 16S rRNA in the 30S particle. May play a critical role in biogenesis of 30S subunits. The chain is Ribosomal RNA small subunit methyltransferase A from Helicobacter acinonychis (strain Sheeba).